The sequence spans 97 residues: Small ribosomal subunit protein bS20 (97 aa).

This sequence belongs to the bacterial ribosomal protein bS20 family.

Functionally, binds directly to 16S ribosomal RNA. This is Small ribosomal subunit protein bS20 from Prochlorococcus marinus (strain MIT 9215).